The following is a 218-amino-acid chain: Embryonic polyadenylate-binding protein 2-A (218 aa).

The span at 1-16 (MSERVSEEPGLDKGDG) shows a compositional bias: basic and acidic residues. Disordered stretches follow at residues 1–26 (MSER…DDPE) and 169–218 (RTNM…NHPY). An RRM domain is found at 93–170 (RSVYVGNVDY…RTIKVLPKRT (78 aa)). Residues 205 to 218 (FRGCGRPGPLNHPY) are compositionally biased toward low complexity.

The protein localises to the cytoplasm. Binds the poly(A) tail of mRNA. Unable to interact with the cap-binding complex and is therefore unlikely to be involved in translation initiation. The polypeptide is Embryonic polyadenylate-binding protein 2-A (Pabpn1l-a) (Xenopus laevis (African clawed frog)).